The chain runs to 348 residues: MNGTEGLNFYVPFSNKTGVVRSPFEYPQYYLAEPWQFSVLAAYMFLLIVLGFPINFLTLYVTVQHKKLRTPLNYIPLNLAVANLFMVFGGFTTTLYTSLHAYFVFGPTGCNLEGFFATLGGEIALWSLVVLAIERYVVVCKPMSNFRFGENHAIMGLALTWVMAMACAAPPLVGWSRYIPEGMQCSCGIDYYTSRQEVNNESFVIYMFVVHFTIPLVIIFFCYGQLVFTVKEAAAQQQESATTQKAEKEVTRMVIIMVVAFLICWVPYASVAFYIFTHQGSDFGPIFMTIPSFFAKSSSIYNPVIYIMMNKQLRNCMLTTLCCGRNPLGDDEASTTASKTETSQVAPA.

The residue at position 1 (M1) is an N-acetylmethionine. Over 1-36 (MNGTEGLNFYVPFSNKTGVVRSPFEYPQYYLAEPWQ) the chain is Extracellular. N-linked (GlcNAc...) asparagine glycosylation is found at N2 and N15. The chain crosses the membrane as a helical span at residues 37 to 61 (FSVLAAYMFLLIVLGFPINFLTLYV). The Cytoplasmic segment spans residues 62–73 (TVQHKKLRTPLN). The chain crosses the membrane as a helical span at residues 74-96 (YIPLNLAVANLFMVFGGFTTTLY). At 97–110 (TSLHAYFVFGPTGC) the chain is on the extracellular side. A disulfide bond links C110 and C187. A helical membrane pass occupies residues 111–133 (NLEGFFATLGGEIALWSLVVLAI). The short motif at 134–136 (ERY) is the 'Ionic lock' involved in activated form stabilization element. The Cytoplasmic portion of the chain corresponds to 134-152 (ERYVVVCKPMSNFRFGENH). A helical membrane pass occupies residues 153-173 (AIMGLALTWVMAMACAAPPLV). Topologically, residues 174-202 (GWSRYIPEGMQCSCGIDYYTSRQEVNNES) are extracellular. Position 201 (E201) interacts with Zn(2+). The helical transmembrane segment at 203 to 224 (FVIYMFVVHFTIPLVIIFFCYG) threads the bilayer. The Cytoplasmic segment spans residues 225-252 (QLVFTVKEAAAQQQESATTQKAEKEVTR). The helical transmembrane segment at 253–274 (MVIIMVVAFLICWVPYASVAFY) threads the bilayer. Topologically, residues 275–286 (IFTHQGSDFGPI) are extracellular. Residue Q279 coordinates Zn(2+). The chain crosses the membrane as a helical span at residues 287 to 308 (FMTIPSFFAKSSSIYNPVIYIM). At K296 the chain carries N6-(retinylidene)lysine. The Cytoplasmic segment spans residues 309-348 (MNKQLRNCMLTTLCCGRNPLGDDEASTTASKTETSQVAPA). S-palmitoyl cysteine attachment occurs at residues C322 and C323. Positions 330–348 (DDEASTTASKTETSQVAPA) are interaction with SAG. S334 carries the phosphoserine modification. Phosphothreonine is present on residues T335 and T336. S338 carries the post-translational modification Phosphoserine. T340 and T342 each carry phosphothreonine. A Phosphoserine modification is found at S343.

Belongs to the G-protein coupled receptor 1 family. Opsin subfamily. Homodimer. May form a complex composed of RHO, GRK1 and RCVRN in a Ca(2+)-dependent manner; RCVRN prevents the interaction between GRK1 and RHO. Interacts with GRK1. Interacts (phosphorylated form) with SAG. Interacts with GNAT1. Interacts with GNAT3. SAG and G-proteins compete for a common binding site. Interacts with PRCD; the interaction promotes PRCD stability. Forms a complex with ASAP1 and ARF4. Forms a complex with ASAP1, RAB11A, Rabin8/RAB3IP, ARF4 and RAB11FIP3; the complex regulates Golgi-to-cilia rhodopsin/RHO transport in photoreceptors. Post-translationally, phosphorylated on some or all of the serine and threonine residues present in the C-terminal region. Contains one covalently linked retinal chromophore. Upon light absorption, the covalently bound 11-cis-retinal is converted to all-trans-retinal. After hydrolysis of the Schiff base and release of the covalently bound all-trans-retinal, active rhodopsin is regenerated by binding of a fresh molecule of 11-cis-retinal.

It localises to the membrane. Its subcellular location is the cell projection. The protein resides in the cilium. The protein localises to the photoreceptor outer segment. Its function is as follows. Photoreceptor required for image-forming vision at low light intensity. Required for photoreceptor cell viability after birth. Light-induced isomerization of 11-cis to all-trans retinal triggers a conformational change that activates signaling via G-proteins. Subsequent receptor phosphorylation mediates displacement of the bound G-protein alpha subunit by the arrestin SAG and terminates signaling. The polypeptide is Rhodopsin (RHO) (Globicephala melas (Long-finned pilot whale)).